Consider the following 446-residue polypeptide: Glucose-6-phosphate isomerase (446 aa).

Glu-288 (proton donor) is an active-site residue. Active-site residues include His-309 and Lys-423.

It belongs to the GPI family.

It is found in the cytoplasm. It carries out the reaction alpha-D-glucose 6-phosphate = beta-D-fructose 6-phosphate. The protein operates within carbohydrate biosynthesis; gluconeogenesis. It functions in the pathway carbohydrate degradation; glycolysis; D-glyceraldehyde 3-phosphate and glycerone phosphate from D-glucose: step 2/4. In terms of biological role, catalyzes the reversible isomerization of glucose-6-phosphate to fructose-6-phosphate. This is Glucose-6-phosphate isomerase from Lactobacillus delbrueckii subsp. bulgaricus (strain ATCC 11842 / DSM 20081 / BCRC 10696 / JCM 1002 / NBRC 13953 / NCIMB 11778 / NCTC 12712 / WDCM 00102 / Lb 14).